Here is a 513-residue protein sequence, read N- to C-terminus: Cytochrome P450 71D445 (513 aa).

A helical; Signal-anchor for type II membrane protein membrane pass occupies residues 12-28; that stretch reads SEWAITSTITLLFLILL. Cys450 serves as a coordination point for heme.

Belongs to the cytochrome P450 family. It depends on heme as a cofactor. As to expression, expressed in mature seeds.

Its subcellular location is the membrane. The catalysed reaction is (-)-casbene + reduced [NADPH--hemoprotein reductase] + O2 = 8-hydroxycasbene + oxidized [NADPH--hemoprotein reductase] + H2O + H(+). It carries out the reaction 4-hydroxycasbene + reduced [NADPH--hemoprotein reductase] + O2 = 4,8-dihydroxycasbene + oxidized [NADPH--hemoprotein reductase] + H2O + H(+). The enzyme catalyses 4,8-dihydroxycasbene + reduced [NADPH--hemoprotein reductase] + O2 = 4,5,8-trihydroxycasbene + oxidized [NADPH--hemoprotein reductase] + H2O + H(+). The protein operates within secondary metabolite biosynthesis; terpenoid biosynthesis. Its function is as follows. Involved in the biosynthesis of macrocyclic lathyrane type diterpenoids (also called Euphorbia factors) natural products, including the cyclization route from casbene to jolkinol C, a precursor for ingenol mebutate that is used to treat actinic keratosis, a precancerous skin condition. Catalyzes the hydroxylation of (-)-casbene and 4-hydroxycasbene to produce 8-hydroxycasbene and 4,8-dihydroxycasbene, respectively. Also mediates the formation of 4-hydroxy-8-ketocasbene from 4,8-dihydroxycasbene. Together with ADH1, triggers the biosynthesis of 8-ketocasbene from 8-hydroxycasbene. This Euphorbia lathyris (Caper spurge) protein is Cytochrome P450 71D445.